The primary structure comprises 132 residues: Small ribosomal subunit protein uS8 (132 aa).

Belongs to the universal ribosomal protein uS8 family. As to quaternary structure, part of the 30S ribosomal subunit. Contacts proteins S5 and S12.

In terms of biological role, one of the primary rRNA binding proteins, it binds directly to 16S rRNA central domain where it helps coordinate assembly of the platform of the 30S subunit. The polypeptide is Small ribosomal subunit protein uS8 (Saccharopolyspora erythraea (strain ATCC 11635 / DSM 40517 / JCM 4748 / NBRC 13426 / NCIMB 8594 / NRRL 2338)).